Here is a 435-residue protein sequence, read N- to C-terminus: Adenylosuccinate synthetase (435 aa).

Residues 13–19 and 41–43 each bind GTP; these read GDEGKGK and GHT. Residue aspartate 14 is the Proton acceptor of the active site. Mg(2+) is bound by residues aspartate 14 and glycine 41. IMP is bound by residues 14 to 17, 39 to 42, threonine 131, arginine 145, glutamine 226, threonine 241, and arginine 309; these read DEGK and NAGH. Histidine 42 acts as the Proton donor in catalysis. 305–311 provides a ligand contact to substrate; that stretch reads TVTGRKR. Residues arginine 311, 337–339, and 419–421 each bind GTP; these read KLD and STG.

Belongs to the adenylosuccinate synthetase family. As to quaternary structure, homodimer. Mg(2+) serves as cofactor.

It localises to the cytoplasm. The catalysed reaction is IMP + L-aspartate + GTP = N(6)-(1,2-dicarboxyethyl)-AMP + GDP + phosphate + 2 H(+). It participates in purine metabolism; AMP biosynthesis via de novo pathway; AMP from IMP: step 1/2. Plays an important role in the de novo pathway of purine nucleotide biosynthesis. Catalyzes the first committed step in the biosynthesis of AMP from IMP. This Dechloromonas aromatica (strain RCB) protein is Adenylosuccinate synthetase.